Here is a 120-residue protein sequence, read N- to C-terminus: NAD(P)H-quinone oxidoreductase subunit 3, chloroplastic (120 aa).

3 helical membrane-spanning segments follow: residues 9–29, 62–82, and 88–108; these read IFWA…FLSG, YYMF…LYPW, and VLGV…IVGL.

It belongs to the complex I subunit 3 family. NDH is composed of at least 16 different subunits, 5 of which are encoded in the nucleus.

It is found in the plastid. It localises to the chloroplast thylakoid membrane. The enzyme catalyses a plastoquinone + NADH + (n+1) H(+)(in) = a plastoquinol + NAD(+) + n H(+)(out). It carries out the reaction a plastoquinone + NADPH + (n+1) H(+)(in) = a plastoquinol + NADP(+) + n H(+)(out). Its function is as follows. NDH shuttles electrons from NAD(P)H:plastoquinone, via FMN and iron-sulfur (Fe-S) centers, to quinones in the photosynthetic chain and possibly in a chloroplast respiratory chain. The immediate electron acceptor for the enzyme in this species is believed to be plastoquinone. Couples the redox reaction to proton translocation, and thus conserves the redox energy in a proton gradient. This is NAD(P)H-quinone oxidoreductase subunit 3, chloroplastic from Trachelium caeruleum (Blue throatwort).